The sequence spans 184 residues: MEPFSSKSLALQAEKKLLSKMAGRSVAHLFIDETSSAVLDELYRVSKEYTHSRPQAQRVIKDLIKVAVKVAVLHRSGCFGPSELALAARFRQKLQQGAMTALSFGEVDFTFEAAVLAGLLTECRDMLLELVEHHLTPKSHNRIRHVFDHFSDPGLLTALYGPDFTQHLGKICDGLRKMLDEGKL.

It belongs to the TNFAIP8 family. TNFAIP8L2 subfamily. In terms of assembly, may interact with CASP8; however, such result is unclear since could not reproduce the interaction with CASP8. Interacts with RAC1. Post-translationally, ubiquitinated in a BTRC-depdent manner; leading to degradation mediated through the proteasome pathway.

It localises to the cytoplasm. Its subcellular location is the nucleus. It is found in the lysosome. Its function is as follows. Acts as a negative regulator of innate and adaptive immunity by maintaining immune homeostasis. Plays a regulatory role in the Toll-like signaling pathway by determining the strength of LPS-induced signaling and gene expression. Inhibits TCR-mediated T-cell activation and negatively regulate T-cell function to prevent hyperresponsiveness. Also inhibits autolysosome formation via negatively modulating MTOR activation by interacting with RAC1 and promoting the disassociation of the RAC1-MTOR complex. Plays an essential role in NK-cell biology by acting as a checkpoint and displaying an expression pattern correlating with NK-cell maturation process and by negatively regulating NK-cell maturation and antitumor immunity. Mechanistically, suppresses IL-15-triggered mTOR activity in NK-cells. The protein is Tumor necrosis factor alpha-induced protein 8-like protein 2 (TNFAIP8L2) of Rhinolophus ferrumequinum (Greater horseshoe bat).